The sequence spans 66 residues: DNA-directed RNA polymerase subunit Rpo10 (66 aa).

Residues Cys-7, Cys-10, Cys-44, and Cys-45 each contribute to the Zn(2+) site.

The protein belongs to the archaeal Rpo10/eukaryotic RPB10 RNA polymerase subunit family. As to quaternary structure, part of the RNA polymerase complex. It depends on Zn(2+) as a cofactor.

It localises to the cytoplasm. It catalyses the reaction RNA(n) + a ribonucleoside 5'-triphosphate = RNA(n+1) + diphosphate. Functionally, DNA-dependent RNA polymerase (RNAP) catalyzes the transcription of DNA into RNA using the four ribonucleoside triphosphates as substrates. The chain is DNA-directed RNA polymerase subunit Rpo10 from Pyrobaculum neutrophilum (strain DSM 2338 / JCM 9278 / NBRC 100436 / V24Sta) (Thermoproteus neutrophilus).